The sequence spans 181 residues: Cytochrome c oxidase subunit 2 (181 aa).

Residues cysteine 126, glutamate 128, cysteine 130, histidine 134, and methionine 137 each contribute to the Cu cation site. Glutamate 128 contributes to the Mg(2+) binding site.

The protein belongs to the cytochrome c oxidase subunit 2 family. As to quaternary structure, component of the cytochrome c oxidase (complex IV, CIV), a multisubunit enzyme composed of a catalytic core of 3 subunits and several supernumerary subunits. The complex exists as a monomer or a dimer and forms supercomplexes (SCs) in the inner mitochondrial membrane with ubiquinol-cytochrome c oxidoreductase (cytochrome b-c1 complex, complex III, CIII). Cu cation is required as a cofactor.

It localises to the mitochondrion inner membrane. It carries out the reaction 4 Fe(II)-[cytochrome c] + O2 + 8 H(+)(in) = 4 Fe(III)-[cytochrome c] + 2 H2O + 4 H(+)(out). Functionally, component of the cytochrome c oxidase, the last enzyme in the mitochondrial electron transport chain which drives oxidative phosphorylation. The respiratory chain contains 3 multisubunit complexes succinate dehydrogenase (complex II, CII), ubiquinol-cytochrome c oxidoreductase (cytochrome b-c1 complex, complex III, CIII) and cytochrome c oxidase (complex IV, CIV), that cooperate to transfer electrons derived from NADH and succinate to molecular oxygen, creating an electrochemical gradient over the inner membrane that drives transmembrane transport and the ATP synthase. Cytochrome c oxidase is the component of the respiratory chain that catalyzes the reduction of oxygen to water. Electrons originating from reduced cytochrome c in the intermembrane space (IMS) are transferred via the dinuclear copper A center (CU(A)) of subunit 2 and heme A of subunit 1 to the active site in subunit 1, a binuclear center (BNC) formed by heme A3 and copper B (CU(B)). The BNC reduces molecular oxygen to 2 water molecules using 4 electrons from cytochrome c in the IMS and 4 protons from the mitochondrial matrix. This chain is Cytochrome c oxidase subunit 2 (COII), found in Paramecium primaurelia.